The sequence spans 199 residues: UPF0301 protein Rfer_1377 (199 aa).

It belongs to the UPF0301 (AlgH) family.

The sequence is that of UPF0301 protein Rfer_1377 from Albidiferax ferrireducens (strain ATCC BAA-621 / DSM 15236 / T118) (Rhodoferax ferrireducens).